We begin with the raw amino-acid sequence, 316 residues long: Diacylglycerol kinase (316 aa).

Residues 1-132 (MRKRARIIYN…VDIGKMNNRY (132 aa)) form the DAGKc domain. ATP is bound by residues 10–14 (NPTSG), Thr41, 67–73 (GDGTLNE), and Thr94. Residues Lys213, Asp216, and Tyr218 each contribute to the Mg(2+) site. The active-site Proton acceptor is Glu273.

This sequence belongs to the diacylglycerol/lipid kinase family. As to quaternary structure, homodimer. Requires Mg(2+) as cofactor.

The enzyme catalyses a 1,2-diacyl-sn-glycerol + ATP = a 1,2-diacyl-sn-glycero-3-phosphate + ADP + H(+). In terms of biological role, catalyzes the phosphorylation of diacylglycerol (DAG) into phosphatidic acid. Is a key enzyme involved in the production of lipoteichoic acid by reintroducing DAG formed from the breakdown of membrane phospholipids into the phosphatidylglycerol biosynthetic pathway. The polypeptide is Diacylglycerol kinase (dagK) (Staphylococcus epidermidis (strain ATCC 35984 / DSM 28319 / BCRC 17069 / CCUG 31568 / BM 3577 / RP62A)).